Reading from the N-terminus, the 308-residue chain is Ribosomal RNA small subunit methyltransferase H (308 aa).

Residues 33–35 (GGH), Asp52, Phe78, Asp99, and Gln106 contribute to the S-adenosyl-L-methionine site. Positions 289–308 (EEIETNSRSRSAKLRVAEKL) are disordered.

Belongs to the methyltransferase superfamily. RsmH family.

It localises to the cytoplasm. It carries out the reaction cytidine(1402) in 16S rRNA + S-adenosyl-L-methionine = N(4)-methylcytidine(1402) in 16S rRNA + S-adenosyl-L-homocysteine + H(+). In terms of biological role, specifically methylates the N4 position of cytidine in position 1402 (C1402) of 16S rRNA. In Thermoanaerobacter sp. (strain X514), this protein is Ribosomal RNA small subunit methyltransferase H.